A 44-amino-acid polypeptide reads, in one-letter code: Thymosin beta-4 (44 aa).

The tract at residues 1–44 (MSDKPDMGEIQKFNKSKLKKTETQEKNPLPSKETIEQEKQAGES) is disordered. N-acetylserine is present on Ser2. Ser2 carries the post-translational modification Phosphoserine. Lys4 carries the N6-acetyllysine modification. Lys12 is subject to N6-acetyllysine; alternate. Lys12 participates in a covalent cross-link: Glycyl lysine isopeptide (Lys-Gly) (interchain with G-Cter in SUMO2); alternate. Phosphothreonine is present on Thr23. Lys26 bears the N6-acetyllysine mark. Ser31 carries the post-translational modification Phosphoserine. At Lys32 the chain carries N6-acetyllysine. Positions 33 to 44 (ETIEQEKQAGES) are enriched in basic and acidic residues. The residue at position 34 (Thr34) is a Phosphothreonine. Lys39 is modified (N6-acetyllysine).

It belongs to the thymosin beta family. Identified in a complex composed of ACTA1, COBL, GSN AND TMSB4X. Interacts with SERPINB1. AcSDKP is inactivated by ACE, which removes the dipeptide Lys-Pro from its C-terminus.

It is found in the cytoplasm. The protein resides in the cytoskeleton. Plays an important role in the organization of the cytoskeleton. Binds to and sequesters actin monomers (G actin) and therefore inhibits actin polymerization. Its function is as follows. Potent inhibitor of bone marrow derived stem cell differentiation. Acts by inhibits the entry of hematopoietic pluripotent stem cells into the S-phase. In Notamacropus eugenii (Tammar wallaby), this protein is Thymosin beta-4 (TMSB4).